Consider the following 290-residue polypeptide: ATP synthase gamma chain (290 aa).

The protein belongs to the ATPase gamma chain family. As to quaternary structure, F-type ATPases have 2 components, CF(1) - the catalytic core - and CF(0) - the membrane proton channel. CF(1) has five subunits: alpha(3), beta(3), gamma(1), delta(1), epsilon(1). CF(0) has three main subunits: a, b and c.

It is found in the cell membrane. Functionally, produces ATP from ADP in the presence of a proton gradient across the membrane. The gamma chain is believed to be important in regulating ATPase activity and the flow of protons through the CF(0) complex. The sequence is that of ATP synthase gamma chain from Wolbachia pipientis subsp. Culex pipiens (strain wPip).